The following is a 193-amino-acid chain: Ion-translocating oxidoreductase complex subunit A (193 aa).

6 helical membrane-spanning segments follow: residues 5–25 (ILFF…FLGL), 47–67 (FVIL…LLPL), 72–92 (LRII…EIVL), 102–122 (LLGI…IPLF), 134–154 (IFYG…FSCI), and 167–187 (FQGA…FMGF).

Belongs to the NqrDE/RnfAE family. The complex is composed of six subunits: RnfA, RnfB, RnfC, RnfD, RnfE and RnfG.

It localises to the cell inner membrane. In terms of biological role, part of a membrane-bound complex that couples electron transfer with translocation of ions across the membrane. This Buchnera aphidicola subsp. Acyrthosiphon pisum (strain APS) (Acyrthosiphon pisum symbiotic bacterium) protein is Ion-translocating oxidoreductase complex subunit A.